Consider the following 434-residue polypeptide: Tryptophan synthase beta chain 2 (434 aa).

N6-(pyridoxal phosphate)lysine is present on Lys-110.

This sequence belongs to the TrpB family. Tetramer of two alpha and two beta chains. The cofactor is pyridoxal 5'-phosphate.

The enzyme catalyses (1S,2R)-1-C-(indol-3-yl)glycerol 3-phosphate + L-serine = D-glyceraldehyde 3-phosphate + L-tryptophan + H2O. It participates in amino-acid biosynthesis; L-tryptophan biosynthesis; L-tryptophan from chorismate: step 5/5. In terms of biological role, the beta subunit is responsible for the synthesis of L-tryptophan from indole and L-serine. This is Tryptophan synthase beta chain 2 (trpB2) from Aquifex aeolicus (strain VF5).